Reading from the N-terminus, the 280-residue chain is MRVILAKRAGFCFGVKRATQMAFEAAGMDKKTYTLGPIIHSPQVVKKLEEMGVRALKDLDSMDSGTIIIRSHGVASHEIAEAMQKKLEIVDATCPFVKKAQEHVKSLSETGYGVVVVGDADHPEVQGIVSYGGDKVFVVGSGEEVRKLPIMNKIGVVAQTTQSFENLKNVVSECLQRGGEIRVFNTICDATAVRQEEAKELARQVDCMLVVGGFNSANTRRLAEVCAELQPRTHHIETAAEIDPAWFEGVATVGVTAGASTPKWIIDEVMGRIGEINKKN.

Cysteine 12 lines the [4Fe-4S] cluster pocket. (2E)-4-hydroxy-3-methylbut-2-enyl diphosphate contacts are provided by histidine 40 and histidine 72. Histidine 40 and histidine 72 together coordinate dimethylallyl diphosphate. The isopentenyl diphosphate site is built by histidine 40 and histidine 72. Cysteine 94 lines the [4Fe-4S] cluster pocket. Histidine 122 contributes to the (2E)-4-hydroxy-3-methylbut-2-enyl diphosphate binding site. Residue histidine 122 coordinates dimethylallyl diphosphate. Histidine 122 lines the isopentenyl diphosphate pocket. The active-site Proton donor is the glutamate 124. A (2E)-4-hydroxy-3-methylbut-2-enyl diphosphate-binding site is contributed by threonine 160. Residue cysteine 188 coordinates [4Fe-4S] cluster. Positions 216, 218, and 260 each coordinate (2E)-4-hydroxy-3-methylbut-2-enyl diphosphate. Dimethylallyl diphosphate-binding residues include serine 216, asparagine 218, and serine 260. Residues serine 216, asparagine 218, and serine 260 each contribute to the isopentenyl diphosphate site.

Belongs to the IspH family. It depends on [4Fe-4S] cluster as a cofactor.

The catalysed reaction is isopentenyl diphosphate + 2 oxidized [2Fe-2S]-[ferredoxin] + H2O = (2E)-4-hydroxy-3-methylbut-2-enyl diphosphate + 2 reduced [2Fe-2S]-[ferredoxin] + 2 H(+). It carries out the reaction dimethylallyl diphosphate + 2 oxidized [2Fe-2S]-[ferredoxin] + H2O = (2E)-4-hydroxy-3-methylbut-2-enyl diphosphate + 2 reduced [2Fe-2S]-[ferredoxin] + 2 H(+). It functions in the pathway isoprenoid biosynthesis; dimethylallyl diphosphate biosynthesis; dimethylallyl diphosphate from (2E)-4-hydroxy-3-methylbutenyl diphosphate: step 1/1. The protein operates within isoprenoid biosynthesis; isopentenyl diphosphate biosynthesis via DXP pathway; isopentenyl diphosphate from 1-deoxy-D-xylulose 5-phosphate: step 6/6. In terms of biological role, catalyzes the conversion of 1-hydroxy-2-methyl-2-(E)-butenyl 4-diphosphate (HMBPP) into a mixture of isopentenyl diphosphate (IPP) and dimethylallyl diphosphate (DMAPP). Acts in the terminal step of the DOXP/MEP pathway for isoprenoid precursor biosynthesis. The sequence is that of 4-hydroxy-3-methylbut-2-enyl diphosphate reductase from Pelobacter propionicus (strain DSM 2379 / NBRC 103807 / OttBd1).